Consider the following 458-residue polypeptide: Phosphoglucosamine mutase (458 aa).

Ser108 functions as the Phosphoserine intermediate in the catalytic mechanism. The Mg(2+) site is built by Ser108, Asp247, Asp249, and Asp251. Residue Ser108 is modified to Phosphoserine.

Belongs to the phosphohexose mutase family. The cofactor is Mg(2+). Activated by phosphorylation.

The catalysed reaction is alpha-D-glucosamine 1-phosphate = D-glucosamine 6-phosphate. Its function is as follows. Catalyzes the conversion of glucosamine-6-phosphate to glucosamine-1-phosphate. This chain is Phosphoglucosamine mutase, found in Nitrosomonas europaea (strain ATCC 19718 / CIP 103999 / KCTC 2705 / NBRC 14298).